Reading from the N-terminus, the 416-residue chain is Gamma-glutamyl phosphate reductase (416 aa).

It belongs to the gamma-glutamyl phosphate reductase family.

Its subcellular location is the cytoplasm. It catalyses the reaction L-glutamate 5-semialdehyde + phosphate + NADP(+) = L-glutamyl 5-phosphate + NADPH + H(+). Its pathway is amino-acid biosynthesis; L-proline biosynthesis; L-glutamate 5-semialdehyde from L-glutamate: step 2/2. In terms of biological role, catalyzes the NADPH-dependent reduction of L-glutamate 5-phosphate into L-glutamate 5-semialdehyde and phosphate. The product spontaneously undergoes cyclization to form 1-pyrroline-5-carboxylate. This Salmonella paratyphi A (strain AKU_12601) protein is Gamma-glutamyl phosphate reductase.